The chain runs to 401 residues: Chalcone synthase 5 (401 aa).

Cys168 is an active-site residue.

It belongs to the thiolase-like superfamily. Chalcone/stilbene synthases family.

It catalyses the reaction (E)-4-coumaroyl-CoA + 3 malonyl-CoA + 3 H(+) = 2',4,4',6'-tetrahydroxychalcone + 3 CO2 + 4 CoA. The protein operates within secondary metabolite biosynthesis; flavonoid biosynthesis. Functionally, the primary product of this enzyme is 4,2',4',6'-tetrahydroxychalcone (also termed naringenin-chalcone or chalcone) which can under specific conditions spontaneously isomerize into naringenin. In Sorghum bicolor (Sorghum), this protein is Chalcone synthase 5 (CHS5).